Consider the following 239-residue polypeptide: Uridylate kinase (239 aa).

ATP is bound at residue 10–13 (KLSG). Residue Gly-52 coordinates UMP. Residues Gly-53 and Arg-57 each contribute to the ATP site. UMP-binding positions include Asp-72 and 133 to 140 (TGNPFFTT). ATP is bound by residues Thr-160, Tyr-166, and Asp-169.

The protein belongs to the UMP kinase family. Homohexamer.

The protein resides in the cytoplasm. It carries out the reaction UMP + ATP = UDP + ADP. It functions in the pathway pyrimidine metabolism; CTP biosynthesis via de novo pathway; UDP from UMP (UMPK route): step 1/1. Inhibited by UTP. Catalyzes the reversible phosphorylation of UMP to UDP. The sequence is that of Uridylate kinase from Porphyromonas gingivalis (strain ATCC BAA-308 / W83).